Here is a 328-residue protein sequence, read N- to C-terminus: DNA-directed RNA polymerase subunit alpha (328 aa).

The alpha N-terminal domain (alpha-NTD) stretch occupies residues 1 to 244 (MEKFLKYEIK…EHLNPIVSVN (244 aa)). An alpha C-terminal domain (alpha-CTD) region spans residues 261–328 (KVKSFAKQIE…VQELGLKFRS (68 aa)).

It belongs to the RNA polymerase alpha chain family. In terms of assembly, homodimer. The RNAP catalytic core consists of 2 alpha, 1 beta, 1 beta' and 1 omega subunit. When a sigma factor is associated with the core the holoenzyme is formed, which can initiate transcription.

It catalyses the reaction RNA(n) + a ribonucleoside 5'-triphosphate = RNA(n+1) + diphosphate. DNA-dependent RNA polymerase catalyzes the transcription of DNA into RNA using the four ribonucleoside triphosphates as substrates. The sequence is that of DNA-directed RNA polymerase subunit alpha from Mycoplasma genitalium (strain ATCC 33530 / DSM 19775 / NCTC 10195 / G37) (Mycoplasmoides genitalium).